Here is a 1067-residue protein sequence, read N- to C-terminus: Chitinase-like protein C25A8.4 (1067 aa).

An N-terminal signal peptide occupies residues 1–18 (MGIKTLIWLSILVVGIYC). 3 consecutive GH18 domains span residues 26–364 (PVHY…IRNT), 372–727 (CTRL…QVCQ), and 743–1067 (FVVS…HKCR). Cysteines 30 and 51 form a disulfide. Residues Asn47 and Asn216 are each glycosylated (N-linked (GlcNAc...) asparagine). An intrachain disulfide couples Cys376 to Cys397. Residues Asn475, Asn538, and Asn710 are each glycosylated (N-linked (GlcNAc...) asparagine). Cysteines 747 and 768 form a disulfide. Residues Asn797 and Asn830 are each glycosylated (N-linked (GlcNAc...) asparagine). Glu855 (proton donor) is an active-site residue. 3 N-linked (GlcNAc...) asparagine glycosylation sites follow: Asn887, Asn933, and Asn1010.

Belongs to the glycosyl hydrolase 18 family.

It localises to the secreted. Putative chitinase. The polypeptide is Chitinase-like protein C25A8.4 (cht-3) (Caenorhabditis elegans).